The following is a 249-amino-acid chain: Ribonuclease HII (249 aa).

Residues 1-19 (MAPRPKAPPQPAEPDPALP) show a composition bias toward pro residues. Residues 1-31 (MAPRPKAPPQPAEPDPALPRPRGRPPKAGAV) are disordered. The 189-residue stretch at 52-240 (APVAGADEVG…VREQQLGLFP (189 aa)) folds into the RNase H type-2 domain. The a divalent metal cation site is built by Asp-58, Glu-59, and Asp-149.

The protein belongs to the RNase HII family. Mn(2+) serves as cofactor. Requires Mg(2+) as cofactor.

It localises to the cytoplasm. The catalysed reaction is Endonucleolytic cleavage to 5'-phosphomonoester.. Its function is as follows. Endonuclease that specifically degrades the RNA of RNA-DNA hybrids. The protein is Ribonuclease HII of Xanthobacter autotrophicus (strain ATCC BAA-1158 / Py2).